The following is a 185-amino-acid chain: Ribosome-recycling factor (185 aa).

It belongs to the RRF family.

Its subcellular location is the cytoplasm. Responsible for the release of ribosomes from messenger RNA at the termination of protein biosynthesis. May increase the efficiency of translation by recycling ribosomes from one round of translation to another. The sequence is that of Ribosome-recycling factor from Francisella tularensis subsp. tularensis (strain FSC 198).